The primary structure comprises 287 residues: Complement C1q-like protein 2 (287 aa).

The signal sequence occupies residues 1–21; sequence MALGLLIAVPLLLQAAPPGAA. A disordered region spans residues 65 to 144; sequence LSANPPPPFI…GTGGGGDTEG (80 aa). One can recognise a Collagen-like domain in the interval 76-118; that stretch reads GPKGDPGRPGKPGPRGPPGEPGPPGPRGPPGEKGDSGRPGLPG. The segment covering 84-104 has biased composition (pro residues); the sequence is PGKPGPRGPPGEPGPPGPRGP. The span at 127 to 141 shows a compositional bias: gly residues; it reads GGVGVVSGGTGGGGD. The region spanning 154–287 is the C1q domain; the sequence is FSGPKIAFYV…TFSGFLLYPD (134 aa).

As to quaternary structure, forms homotrimers which can further assemble to form higher-order oligomeric complexes. Interacts with ADGRB3. May interact with ERFE. Forms heterooligomers with C1QL3 and C1QL4, when proteins are coexpressed; this interaction does not occur after secretion. Glycosylated, but not with N-linked glycans. Highest expression in eye, followed by placenta and brain, intermediate expression in adipose tissue and lowest expression in lymph node and testis.

Its subcellular location is the secreted. May regulate the number of excitatory synapses that are formed on hippocampus neurons. Has no effect on inhibitory synapses. In Mus musculus (Mouse), this protein is Complement C1q-like protein 2 (C1ql2).